A 172-amino-acid polypeptide reads, in one-letter code: Adenine phosphoribosyltransferase (172 aa).

It belongs to the purine/pyrimidine phosphoribosyltransferase family. Homodimer.

Its subcellular location is the cytoplasm. It catalyses the reaction AMP + diphosphate = 5-phospho-alpha-D-ribose 1-diphosphate + adenine. The protein operates within purine metabolism; AMP biosynthesis via salvage pathway; AMP from adenine: step 1/1. Functionally, catalyzes a salvage reaction resulting in the formation of AMP, that is energically less costly than de novo synthesis. This is Adenine phosphoribosyltransferase from Synechococcus sp. (strain CC9311).